Reading from the N-terminus, the 211-residue chain is WUSCHEL-related homeobox 14 (211 aa).

The homeobox; WUS-type DNA-binding region spans 91–155 (STRHRWTPTS…NRRARSKRKQ (65 aa)). The tract at residues 147–183 (RRARSKRKQPQTTTANGQADDVAVTTEERRSCGDSGG) is disordered.

This sequence belongs to the WUS homeobox family. As to expression, expressed in root vasculature, pericycle and stamen. Expressed in the procambium during stem maturation.

It localises to the nucleus. Functionally, acts redundantly with WOX4 downstream of the TDR/PXY receptor kinase to regulate procambial cell proliferation and differentiation in vascular tissue, independently of any role in vascular. Involved in the regulation of gibberellin (GA) biosynthesis pathway. Positively regulates the expression of the GA biosynthesis gene GA3OX1, and negatively regulates the expression of GA2OX1 during secondary growth, which increases bioactive GA content in the inflorescence stem. Promotes vascular cell differentiation in the inflorescence stem. Its function is as follows. Transcription factor which may be involved in developmental processes. The protein is WUSCHEL-related homeobox 14 (WOX14) of Arabidopsis thaliana (Mouse-ear cress).